The chain runs to 1072 residues: MKSLKGRLLFLRKFVFFSLLILLFAHGASSSSSSFNYFDKRTNGKANNELALFSPTADSPSSVDGVLELPSAENVFAESSLYNAFIVATVDGSLHSYDRITGQELWSLFTNANPGLSYTKDENSLLSSKFLSQSNFKSYNSTHGEFYSDSTLNISYLSDDDTVWFVEPIDGGILYAFNLQTGLVRLPHSIKDLVHASPIRLLNNNVFVGSKNTTLFTIDVSNGDIVSQYPSGHRYETHHSVHNLGTKRDSVPSGADSDLSFKDPSGKKLSESLDLLDDFNYQVTVSNKSFVDIARTEYFITIYSDSNVILDLVYIDWTPTKNEIMYESFHSSSFDSKLALSSYDSSLHIVDTHSKFIKQNIPLMSPAATVFDIVTLPHNKKIDKSQTPAKFPTSVLLRQPIDTYLETMFPQIARNKTEHVYINHIGNAWFAMSERHYPLVSLAPEASFLYYNGFYIPLNSIFGLHSLMATPKPFFALPGLPGYDIPSYVESEGSTKTLPSIGKKPIPLLDPNPISSTPISITFWVIMFLSVSFTIVTFFSILRIRSSEVRPLKSQKNTVSINNKIDTSKRRRKGKRRKRVSDEHSASSNFNEIESQASFEQNQTLDILSENIVEIQDKSTDPLQKSLDSSLKSHLPEATVIQNTDGSVTVNSLTVYPEVIGYGSHGTIVYRGVYEDREVAVKRVLMEFYDLASREITLLQQSDNHPNIVRYYCKQKSDQFLYIVIELCKCNLSDLIEKPIAYDDLFKSIDLVSLLYQIAFGVSHLHSLDLVHRDLKPQNILLVVNNSPNLSKTRVRALISDFGLSKKLDFNQSSLRNTTFEAAGSYGWRSPEILSGSLSQQSKEIQVKTREGRIRQASHATDIFALGCIFYYTLTGGMHPFGSHYDCEGNILKGNYCLVHLQSLGECGVLAADLIEDMIAFEPSKRPTIEVVLNHPLFWDYAKKLDFLIDVSDRFEVEERDPPSPLLQMLENNSKSVIGENWTTCLHSSLVDNLGKYRKYDGSKILDILRVLRNKRHHYQDLPESVRRVLGDLPDGFTSYFVEKFPMLLLHCYHLVKDVLYEESQFKRYLEY.

A signal peptide spans 1–30 (MKSLKGRLLFLRKFVFFSLLILLFAHGASS). At 31 to 518 (SSSSFNYFDK…LDPNPISSTP (488 aa)) the chain is on the lumenal side. The interval 243–262 (NLGTKRDSVPSGADSDLSFK) is disordered. Residues 519 to 539 (ISITFWVIMFLSVSFTIVTFF) form a helical membrane-spanning segment. Topologically, residues 540-1072 (SILRIRSSEV…ESQFKRYLEY (533 aa)) are cytoplasmic. The disordered stretch occupies residues 553 to 593 (KSQKNTVSINNKIDTSKRRRKGKRRKRVSDEHSASSNFNEI). Residues 554-565 (SQKNTVSINNKI) show a composition bias toward polar residues. The segment covering 569-579 (KRRRKGKRRKR) has biased composition (basic residues). Residues 654 to 938 (TVYPEVIGYG…IEVVLNHPLF (285 aa)) enclose the Protein kinase domain. ATP contacts are provided by residues 660-668 (IGYGSHGTI) and Lys682. Ser664, Lys682, Glu726, Cys728, and Asn731 together coordinate ADP. The Proton acceptor role is filled by Asp774. Mg(2+) contacts are provided by Asn779 and Asp801. Residues 941–1072 (YAKKLDFLID…ESQFKRYLEY (132 aa)) enclose the KEN domain.

This sequence belongs to the protein kinase superfamily. Ser/Thr protein kinase family. Mg(2+) serves as cofactor. Post-translationally, autophosphorylated mainly on serine residues; phosphorylation enables nucleotide binding by the active site.

Its subcellular location is the endoplasmic reticulum membrane. It catalyses the reaction L-seryl-[protein] + ATP = O-phospho-L-seryl-[protein] + ADP + H(+). The enzyme catalyses L-threonyl-[protein] + ATP = O-phospho-L-threonyl-[protein] + ADP + H(+). Endoplasmic reticulum (ER) membrane-resident kinase/endoribonuclease involved in unfolded protein response (UPR). Initiates the selective decay of a subset of ER-localized-mRNAs that is required to survive ER stress. Rather than relying on a transcriptional program to up-regulate genes that enhance ER protein folding capacity as in S.cerevisiae, S.pombe cells reduce the amount of specific proteins entering the organelle by decreasing the level of ER-targeted mRNAs using ire1-dependent mRNA degradation. The sole mRNA cleaved upon ire1 activation that escapes decay is the ER chaperone bip1 mRNA which is more stable and hence is present at an increased steady-state after ire1 cleavage. Promotes ER stress-induced ER-phagy and via up-regulation of the protein level of the ER-phagy receptor epr1. The polypeptide is Sensor for unfolded proteins in the ER ire1 (ire1) (Schizosaccharomyces pombe (strain 972 / ATCC 24843) (Fission yeast)).